A 564-amino-acid chain; its full sequence is Formate--tetrahydrofolate ligase (564 aa).

Thr65 to Thr72 contacts ATP.

The protein belongs to the formate--tetrahydrofolate ligase family.

The enzyme catalyses (6S)-5,6,7,8-tetrahydrofolate + formate + ATP = (6R)-10-formyltetrahydrofolate + ADP + phosphate. Its pathway is one-carbon metabolism; tetrahydrofolate interconversion. This is Formate--tetrahydrofolate ligase from Roseiflexus castenholzii (strain DSM 13941 / HLO8).